The sequence spans 258 residues: UPF0246 protein HI_0984 (258 aa).

Belongs to the UPF0246 family.

The protein is UPF0246 protein HI_0984 of Haemophilus influenzae (strain ATCC 51907 / DSM 11121 / KW20 / Rd).